The chain runs to 320 residues: ATP-dependent 6-phosphofructokinase (320 aa).

G12 is a binding site for ATP. ADP-binding positions include 22–26 (RGVVR) and 55–60 (RYSVSD). ATP contacts are provided by residues 73 to 74 (RF) and 103 to 106 (GDGS). D104 is a binding site for Mg(2+). Residue 126-128 (TID) participates in substrate binding. Catalysis depends on D128, which acts as the Proton acceptor. R155 is a binding site for ADP. Substrate contacts are provided by residues R163 and 170-172 (MGR). Residues 186–188 (GCE), K212, and 214–216 (KKH) contribute to the ADP site. Substrate-binding positions include E223, R244, and 250–253 (HIQR).

Belongs to the phosphofructokinase type A (PFKA) family. ATP-dependent PFK group I subfamily. Prokaryotic clade 'B1' sub-subfamily. Homotetramer. Mg(2+) is required as a cofactor.

Its subcellular location is the cytoplasm. The enzyme catalyses beta-D-fructose 6-phosphate + ATP = beta-D-fructose 1,6-bisphosphate + ADP + H(+). It participates in carbohydrate degradation; glycolysis; D-glyceraldehyde 3-phosphate and glycerone phosphate from D-glucose: step 3/4. Allosterically activated by ADP and other diphosphonucleosides, and allosterically inhibited by phosphoenolpyruvate. Functionally, catalyzes the phosphorylation of D-fructose 6-phosphate to fructose 1,6-bisphosphate by ATP, the first committing step of glycolysis. This chain is ATP-dependent 6-phosphofructokinase, found in Salmonella agona (strain SL483).